The primary structure comprises 313 residues: N-acetyl-gamma-glutamyl-phosphate reductase (313 aa).

Residue Cys-117 is part of the active site.

This sequence belongs to the NAGSA dehydrogenase family. Type 2 subfamily.

It is found in the cytoplasm. The enzyme catalyses N-acetyl-L-glutamate 5-semialdehyde + phosphate + NADP(+) = N-acetyl-L-glutamyl 5-phosphate + NADPH + H(+). The protein operates within amino-acid biosynthesis; L-arginine biosynthesis; N(2)-acetyl-L-ornithine from L-glutamate: step 3/4. In terms of biological role, catalyzes the NADPH-dependent reduction of N-acetyl-5-glutamyl phosphate to yield N-acetyl-L-glutamate 5-semialdehyde. The chain is N-acetyl-gamma-glutamyl-phosphate reductase from Burkholderia cenocepacia (strain HI2424).